The chain runs to 433 residues: Acetyl-CoA-benzylalcohol acetyltransferase (433 aa).

Active-site proton acceptor residues include His-152 and Asp-377.

It belongs to the plant acyltransferase family.

The enzyme catalyses benzyl alcohol + acetyl-CoA = benzyl acetate + CoA. It carries out the reaction (E)-cinnamyl alcohol + acetyl-CoA = (E)-cinnamyl acetate + CoA. Involved in the biosynthesis of benzyl acetate, a major constituent of the floral scent. Can use benzylalcohol, cinnamylalcohol, 3-cis-hexene-1-ol or heptanol as substrates. Has some activity with 2-phenylethanol and 2-naphtalene-ethanol. This chain is Acetyl-CoA-benzylalcohol acetyltransferase (BEAT), found in Clarkia breweri (Fairy fans).